Reading from the N-terminus, the 442-residue chain is MRGNFMSSIEKLGGLKQRLTITVPAEEVDKAYKSRLLKVARTAKIPKFRPGKASPAVVEKLYGKAILQEVGSELIQSSLREAVEEHQLRVAGAPDIKMDKILRGEPFKYVVNFEVYPEITLESLAGETIERTQVEITEEDLDKMLEALRKQYAEWKEMDRPAKADDRVIIDFEGTLDGKPFERGSAKDFQLELGSKRMIAGFEEGIEGMKPGESKALDITFPADYPSEDLAGKAAVFNITLQKVMAPELPVLDEQFAERLGIKEGGLEALRQKVRTNMEKEVHHHMENKLKMAVLDKLIERNPIEVPESLIEAEIDHLQQMTRQQVAMQTHKPDEAKKMELPRDPYREQATKRVKLGLLLAEVVKQHKIKADPEQLRARVEEVAASYQDPEKVISWYYTNKQMLSEIESVVLEDQAVAQLMSELEVKDQAIPYEEAVKQIQQ.

Residues 165–250 enclose the PPIase FKBP-type domain; sequence DDRVIIDFEG…LQKVMAPELP (86 aa).

This sequence belongs to the FKBP-type PPIase family. Tig subfamily.

Its subcellular location is the cytoplasm. The enzyme catalyses [protein]-peptidylproline (omega=180) = [protein]-peptidylproline (omega=0). Involved in protein export. Acts as a chaperone by maintaining the newly synthesized protein in an open conformation. Functions as a peptidyl-prolyl cis-trans isomerase. The chain is Trigger factor from Coxiella burnetii (strain RSA 493 / Nine Mile phase I).